Here is a 794-residue protein sequence, read N- to C-terminus: MEDGPSNNASCFRRLTECFLSPSLTDEKVKAYLSLHPQVLDEFVSESVSAETVEKWLKRKNNKAEDEPSPKEVSRYQDTNMQGVVYELNSYIEQRLDTGGDNHLLLYELSSIIRIATKADGFALYFLGECNNSLCVFTPPGMKEGQPRLIPAGPITQGTTISAYVAKSRKTLLVEDILGDERFPRGTGLESGTRIQSVLCLPIVTAIGDLIGILELYRHWGKEAFCLSHQEVATANLAWASVAIHQVQVCRGLAKQTELNDFLLDVSKTYFDNIVAIDSLLEHIMIYAKNLVNADRCALFQVDHKNKELYSDLFDIGEEKEGKPVFKKTKEIRFSIEKGIAGQVARTGEVLNIPDAYADPRFNREVDLYTGYTTRNILCMPIVSRGSVIGVVQMVNKISGSAFSKTDENNFKMFAVFCALALHCANMYHRIRHSECIYRVTMEKLSYHSICTSEEWQGLMHFNLPARICRDIELFHFDIGPFENMWPGIFVYMIHRSCGTSCFELEKLCRFIMSVKKNYRRVPYHNWKHAVTVAHCMYAILQNNNGLFTDLERKGLLIACLCHDLDHRGFSNSYLQKFDHPLAALYSTSTMEQHHFSQTVSILQLEGHNIFSTLSSSEYEQVLEIIRKAIIATDLALYFGNRKQLEEMYQTGSLNLHNQSHRDRVIGLMMTACDLCSVTKLWPVTKLTANDIYAEFWAEGDEMKKLGIQPIPMMDRDKRDEVPQGQLGFYNAVAIPCYTTLTQILPPTEPLLKACRDNLNQWEKVIRGEETAMWISGPATSKSTSEKPTRKVDD.

3',5'-cyclic AMP contacts are provided by residues 296–297 (RC), 340–341 (IA), threonine 374, glutamine 393, and histidine 525. The 318-residue stretch at 452–769 (TSEEWQGLMH…NQWEKVIRGE (318 aa)) folds into the PDEase domain. The active-site Proton donor is histidine 525. Histidine 525 contacts 3',5'-cyclic GMP. Residues histidine 529, histidine 563, aspartate 564, and aspartate 674 each contribute to the a divalent metal cation site. Glutamine 726 contributes to the 3',5'-cyclic AMP binding site. Glutamine 726 provides a ligand contact to 3',5'-cyclic GMP.

It belongs to the cyclic nucleotide phosphodiesterase family. Homodimer. It depends on a divalent metal cation as a cofactor. Detected in striatum and testis (at protein level). Detected in whole brain, hippocampus, olfactory bulb, striatum neurons and testis.

The protein resides in the cytoplasm. It localises to the cytosol. The enzyme catalyses a nucleoside 3',5'-cyclic phosphate + H2O = a nucleoside 5'-phosphate + H(+). It catalyses the reaction 3',5'-cyclic AMP + H2O = AMP + H(+). It carries out the reaction 3',5'-cyclic GMP + H2O = GMP + H(+). Its pathway is purine metabolism; 3',5'-cyclic AMP degradation; AMP from 3',5'-cyclic AMP: step 1/1. The protein operates within purine metabolism; 3',5'-cyclic GMP degradation; GMP from 3',5'-cyclic GMP: step 1/1. Inhibited by dipyridamole and moderately by IBMX, zaprinast and rolipram. Functionally, plays a role in signal transduction by regulating the intracellular concentration of cyclic nucleotides. Can hydrolyze both cAMP and cGMP, but has higher affinity for cAMP and is more efficient with cAMP as substrate. The protein is cAMP and cAMP-inhibited cGMP 3',5'-cyclic phosphodiesterase 10A (Pde10a) of Rattus norvegicus (Rat).